A 1266-amino-acid chain; its full sequence is 5-oxoprolinase 1 (1266 aa).

Belongs to the oxoprolinase family. In terms of tissue distribution, expressed in roots, stems, leaves, flowers and siliques.

It is found in the cytoplasm. The enzyme catalyses 5-oxo-L-proline + ATP + 2 H2O = L-glutamate + ADP + phosphate + H(+). In terms of biological role, catalyzes the cleavage of 5-oxo-L-proline to form L-glutamate coupled to the hydrolysis of ATP to ADP and inorganic phosphate. Acts in the glutathione degradation pathway. The sequence is that of 5-oxoprolinase 1 from Arabidopsis thaliana (Mouse-ear cress).